Reading from the N-terminus, the 54-residue chain is Photoreceptor disk component PRCD (54 aa).

A lipid anchor (S-palmitoyl cysteine) is attached at Cys-2. The segment at 24–54 (QPEPNGVDGAVSGSSLETDLQSSGREKEPLK) is disordered. Polar residues predominate over residues 35–46 (SGSSLETDLQSS).

The protein belongs to the PRCD family. In terms of assembly, interacts with RHO/rhodopsin; the interaction promotes PRCD stability. Post-translationally, palmitoylated at Cys-2. Palmitoylation is essential for protein stability and trafficking to the photoreceptor outer segment, but does not appear to be essential for membrane localization. Probably palmitoylated by ZDHHC3. Phosphorylated. As to expression, expressed in retina (at protein level).

It is found in the cell projection. Its subcellular location is the cilium. The protein localises to the photoreceptor outer segment. The protein resides in the membrane. It localises to the endoplasmic reticulum. It is found in the golgi apparatus. Its function is as follows. Involved in vision. This is Photoreceptor disk component PRCD from Bos taurus (Bovine).